The following is a 154-amino-acid chain: Ribonuclease H (154 aa).

The region spanning 1-142 (MRKQVEIFTD…CDELARAAAG (142 aa)) is the RNase H type-1 domain. The Mg(2+) site is built by Asp-10, Glu-48, Asp-70, and Asp-134.

Belongs to the RNase H family. As to quaternary structure, monomer. Mg(2+) serves as cofactor.

It localises to the cytoplasm. The enzyme catalyses Endonucleolytic cleavage to 5'-phosphomonoester.. Functionally, endonuclease that specifically degrades the RNA of RNA-DNA hybrids. The chain is Ribonuclease H from Pectobacterium carotovorum subsp. carotovorum (strain PC1).